A 245-amino-acid polypeptide reads, in one-letter code: Biosynthetic peptidoglycan transglycosylase (245 aa).

Residues 20–42 traverse the membrane as a helical segment; it reads VYAGSVFAGAWLATQLFYLAQIA.

Belongs to the glycosyltransferase 51 family.

It is found in the cell inner membrane. The enzyme catalyses [GlcNAc-(1-&gt;4)-Mur2Ac(oyl-L-Ala-gamma-D-Glu-L-Lys-D-Ala-D-Ala)](n)-di-trans,octa-cis-undecaprenyl diphosphate + beta-D-GlcNAc-(1-&gt;4)-Mur2Ac(oyl-L-Ala-gamma-D-Glu-L-Lys-D-Ala-D-Ala)-di-trans,octa-cis-undecaprenyl diphosphate = [GlcNAc-(1-&gt;4)-Mur2Ac(oyl-L-Ala-gamma-D-Glu-L-Lys-D-Ala-D-Ala)](n+1)-di-trans,octa-cis-undecaprenyl diphosphate + di-trans,octa-cis-undecaprenyl diphosphate + H(+). It participates in cell wall biogenesis; peptidoglycan biosynthesis. Peptidoglycan polymerase that catalyzes glycan chain elongation from lipid-linked precursors. The sequence is that of Biosynthetic peptidoglycan transglycosylase from Burkholderia lata (strain ATCC 17760 / DSM 23089 / LMG 22485 / NCIMB 9086 / R18194 / 383).